The sequence spans 384 residues: DNA polymerase IV (384 aa).

The UmuC domain maps to 5 to 182 (IIHVDMDAFF…LPVTKVHGIG (178 aa)). Positions 9, 10, and 103 each coordinate Mg(2+). The active site involves E104.

Belongs to the DNA polymerase type-Y family. In terms of assembly, monomer. The cofactor is Mg(2+).

The protein localises to the cytoplasm. It catalyses the reaction DNA(n) + a 2'-deoxyribonucleoside 5'-triphosphate = DNA(n+1) + diphosphate. In terms of biological role, poorly processive, error-prone DNA polymerase involved in translesion repair and untargeted mutagenesis. Copies undamaged DNA at stalled replication forks, which arise in vivo from mismatched or misaligned primer ends. These misaligned primers can be extended by PolIV. Exhibits no 3'-5' exonuclease (proofreading) activity. Involved in translesional synthesis. Primer extension fidelity in vitro is temperature-dependent. Inserts a correct base opposite templating bases at 70 degrees Celsius, but at 37 degrees Celsius in addition to correct base pairing, base transitions, transversions and frameshifts can occur. Preferably forms erroneous base pairs C:T. Bypasses 8-oxo-dG oxidative damage by incorporating dATP or dCTP opposite of the damaged DNA template site at both temperatures in vitro. The protein is DNA polymerase IV of Caldanaerobacter subterraneus subsp. tengcongensis (strain DSM 15242 / JCM 11007 / NBRC 100824 / MB4) (Thermoanaerobacter tengcongensis).